A 751-amino-acid chain; its full sequence is MTISSPEREAKKVKIAVDRNPVETSFEKWAKPGHFSRTLSKGPNTTTWIWNLHADAHDFDSHTSDLEEISRKVFSAHFGQLGVIFIWLSGMYFHGARFSNYEAWLSDPVHIKPSAQVVWPVVGQEILNGDVGGGFQGIQITSGFFQLWRASGITSELQLYTTAIGGLVMAAAMFFAGWFHYHKAAPKLEWFQNVESMLNHHLAGLLGLGSLSWAGHQIHVSLPVNKLLDAGVDPKEIPLPHEFLLNRQIMQDLYPSFAKGLAPFFTLQWGEYSDFLTFNGGLNPVTGGLWLSDTAHHHLAIAVLFLVAGHMYRTNWGIGHSMREILDAHKGPFTGEGHVGLYEILTTSWHAQLAINLALFGSLSIIVAHHMYSMPPYPYLATDYGTQLSLFTHHNWIGGFCIVGAGAHAAIFMVRDYDPTNNYNNLLDRVIRHRDAIISHLNWVCIFLGFHSFGLYIHNDTMSALGRPQDMFSDTAIQLQPVFAQWIQKTHFLAPQLTAPTALSATSATWGGDVVAVGGKVAMMPISLGTSDFLVHHIHAFTIHVTVLILLKGVLFARSSRLIPDKANLGFRFPCDGPGRGGTCQVSAWDHVFLGLFWMYNSLSIAIFHFSWKMQSDVWGTVTANGVSHITGGNFAQSANTINGWLRDFLWAQSSQVIQSYGSALSAYGLMFLGAHFVWAFSLMFLFSGRGYWQELIESIIWAHSKLKVAPSIQPRALSITQGRAVGVAHYLLGGIATTWSFFLARIIAVG.

8 consecutive transmembrane segments (helical) span residues 73-96 (VFSAHFGQLGVIFIWLSGMYFHGA), 159-182 (LYTTAIGGLVMAAAMFFAGWFHYH), 198-222 (LNHHLAGLLGLGSLSWAGHQIHVSL), 294-312 (TAHHHLAIAVLFLVAGHMY), 349-372 (WHAQLAINLALFGSLSIIVAHHMY), 388-414 (LSLFTHHNWIGGFCIVGAGAHAAIFMV), 436-458 (AIISHLNWVCIFLGFHSFGLYIH), and 533-551 (FLVHHIHAFTIHVTVLILL). [4Fe-4S] cluster-binding residues include Cys575 and Cys584. Helical transmembrane passes span 591 to 612 (HVFLGLFWMYNSLSIAIFHFSW) and 665 to 687 (LSAYGLMFLGAHFVWAFSLMFLF). A chlorophyll a'-binding site is contributed by His676. Positions 684 and 692 each coordinate chlorophyll a. Trp693 provides a ligand contact to phylloquinone. The chain crosses the membrane as a helical span at residues 725 to 745 (AVGVAHYLLGGIATTWSFFLA).

Belongs to the PsaA/PsaB family. As to quaternary structure, the PsaA/B heterodimer binds the P700 chlorophyll special pair and subsequent electron acceptors. PSI consists of a core antenna complex that captures photons, and an electron transfer chain that converts photonic excitation into a charge separation. The eukaryotic PSI reaction center is composed of at least 11 subunits. P700 is a chlorophyll a/chlorophyll a' dimer, A0 is one or more chlorophyll a, A1 is one or both phylloquinones and FX is a shared 4Fe-4S iron-sulfur center. is required as a cofactor.

The protein localises to the plastid. It is found in the chloroplast thylakoid membrane. The enzyme catalyses reduced [plastocyanin] + hnu + oxidized [2Fe-2S]-[ferredoxin] = oxidized [plastocyanin] + reduced [2Fe-2S]-[ferredoxin]. Its function is as follows. PsaA and PsaB bind P700, the primary electron donor of photosystem I (PSI), as well as the electron acceptors A0, A1 and FX. PSI is a plastocyanin/cytochrome c6-ferredoxin oxidoreductase, converting photonic excitation into a charge separation, which transfers an electron from the donor P700 chlorophyll pair to the spectroscopically characterized acceptors A0, A1, FX, FA and FB in turn. Oxidized P700 is reduced on the lumenal side of the thylakoid membrane by plastocyanin or cytochrome c6. The sequence is that of Photosystem I P700 chlorophyll a apoprotein A1 from Tetradesmus obliquus (Green alga).